The following is a 194-amino-acid chain: Small ribosomal subunit protein uS4c (194 aa).

The tract at residues 13–36 (GLTSKRPRSGSDPKNQLRSGKKSQ) is disordered. Residues 82–143 (MRLDNILFRL…KQRSKALIQN (62 aa)) form the S4 RNA-binding domain.

This sequence belongs to the universal ribosomal protein uS4 family. In terms of assembly, part of the 30S ribosomal subunit. Contacts protein S5. The interaction surface between S4 and S5 is involved in control of translational fidelity.

It localises to the plastid. It is found in the chloroplast. In terms of biological role, one of the primary rRNA binding proteins, it binds directly to 16S rRNA where it nucleates assembly of the body of the 30S subunit. Its function is as follows. With S5 and S12 plays an important role in translational accuracy. The protein is Small ribosomal subunit protein uS4c (rps4) of Moraea spathulata (Large yellow moraea).